Here is a 307-residue protein sequence, read N- to C-terminus: Aspartate carbamoyltransferase catalytic subunit (307 aa).

Carbamoyl phosphate contacts are provided by arginine 59 and threonine 60. Lysine 87 is an L-aspartate binding site. The carbamoyl phosphate site is built by arginine 109, histidine 137, and glutamine 140. Residues arginine 173 and arginine 223 each coordinate L-aspartate. Carbamoyl phosphate-binding residues include glycine 266 and proline 267.

Belongs to the aspartate/ornithine carbamoyltransferase superfamily. ATCase family. As to quaternary structure, heterododecamer (2C3:3R2) of six catalytic PyrB chains organized as two trimers (C3), and six regulatory PyrI chains organized as three dimers (R2).

It carries out the reaction carbamoyl phosphate + L-aspartate = N-carbamoyl-L-aspartate + phosphate + H(+). It participates in pyrimidine metabolism; UMP biosynthesis via de novo pathway; (S)-dihydroorotate from bicarbonate: step 2/3. Functionally, catalyzes the condensation of carbamoyl phosphate and aspartate to form carbamoyl aspartate and inorganic phosphate, the committed step in the de novo pyrimidine nucleotide biosynthesis pathway. The chain is Aspartate carbamoyltransferase catalytic subunit from Helicobacter pylori (strain Shi470).